Here is a 259-residue protein sequence, read N- to C-terminus: Beta-glucanase (259 aa).

An N-terminal signal peptide occupies residues 1–31 (MVKSKYLVFISVFSLLFGVFVVGFSHQGVKA). One can recognise a GH16 domain in the interval 35–255 (RPMGTAFYES…WVRYTPLQNY (221 aa)). Glutamate 142 acts as the Nucleophile in catalysis. Glutamate 146 serves as the catalytic Proton donor.

It belongs to the glycosyl hydrolase 16 family.

The catalysed reaction is Hydrolysis of (1-&gt;4)-beta-D-glucosidic linkages in beta-D-glucans containing (1-&gt;3)- and (1-&gt;4)-bonds.. In terms of biological role, hydrolyzes B-glucans containing mixed beta-1,3 and beta-1,4 linkages. In Brevibacillus brevis (Bacillus brevis), this protein is Beta-glucanase (bglBB).